Reading from the N-terminus, the 322-residue chain is tRNA uridine(34) hydroxylase (322 aa).

The region spanning 125-219 (QDPNTIVIDA…YGKDPEVQGK (95 aa)) is the Rhodanese domain. Cysteine 179 functions as the Cysteine persulfide intermediate in the catalytic mechanism.

Belongs to the TrhO family.

The catalysed reaction is uridine(34) in tRNA + AH2 + O2 = 5-hydroxyuridine(34) in tRNA + A + H2O. In terms of biological role, catalyzes oxygen-dependent 5-hydroxyuridine (ho5U) modification at position 34 in tRNAs. This is tRNA uridine(34) hydroxylase from Bacillus subtilis (strain 168).